The following is a 293-amino-acid chain: Putative ribose uptake protein RbsU (293 aa).

A run of 10 helical transmembrane segments spans residues 5-24, 34-51, 58-80, 95-114, 121-138, 153-170, 177-199, 212-234, 241-263, and 273-292; these read AILIGLGPLLGWGLFPTIAS, IFGATVGTLIFAIVLALF, GGMALVFSLISGAGWAFGQIITF, TTAFQLLGASLWGVFALGNW, IIGFLALLVILIGARMTV, SAVILLLVGEIGYWIYSA, IGGFKAFLPQAIGMVIVAVIYAL, VSWQQTISGFFFAFAALTYLISA, LATGFVLSQTSVVLATLTGIFFL, and MITIVGLVLILVAASITVFI.

It belongs to the GRP transporter (TC 2.A.7.5) family.

It localises to the cell membrane. In terms of biological role, could be involved in the uptake of ribose. This is Putative ribose uptake protein RbsU (rbsU) from Staphylococcus epidermidis (strain ATCC 35984 / DSM 28319 / BCRC 17069 / CCUG 31568 / BM 3577 / RP62A).